The chain runs to 190 residues: Vacuolar protein sorting-associated protein 29 (190 aa).

The protein belongs to the VPS29 family. Component of the retromer complex which consists of VPS29 (MAG1), VPS26 (VPS26A or VPS26B), VPS35 (VPS35A or VPS35B or VPS35C), VPS5/17 (SNX1 or SNX2A or SNX2B). Component of a retromer subcomplex consisting of VPS29 (MAG1), VPS26 (VPS26A or VPS26B), VPS35 (VPS35A or VPS35B or VPS35C).

The protein resides in the cytoplasm. The protein localises to the endosome membrane. It localises to the prevacuolar compartment membrane. Its subcellular location is the golgi apparatus. It is found in the trans-Golgi network membrane. The protein resides in the late endosome membrane. In terms of biological role, plays a role in vesicular protein sorting. Component of the membrane-associated retromer complex which is essential in endosome-to-Golgi retrograde transport. Required for the auxin-carrier protein PIN2 sorting to the lytic vacuolar pathway and the PIN1 recycling to the plasma membrane, thus influencing auxin transport orientation. Also involved in the efficient sorting of seed storage proteins globulin 12S and albumin 2S. The VPS29-VPS26-VPS35 subcomplex may be involved in recycling of specific cargos from endosome to the plasma membrane. The sequence is that of Vacuolar protein sorting-associated protein 29 from Arabidopsis thaliana (Mouse-ear cress).